Here is a 410-residue protein sequence, read N- to C-terminus: PHAF1 protein At3g51130 (410 aa).

Belongs to the PHAF1 family.

The chain is PHAF1 protein At3g51130 from Arabidopsis thaliana (Mouse-ear cress).